The primary structure comprises 80 residues: Venom protein HGE029 (80 aa).

The first 22 residues, 1–22, serve as a signal peptide directing secretion; the sequence is MNAKAFLAIFMIALLITDRAEA.

It belongs to the non-disulfide-bridged peptide (NDBP) superfamily. Long chain multifunctional peptide (group 2) family. Expressed by the venom gland.

The protein localises to the secreted. This Hoffmannihadrurus gertschi (Scorpion) protein is Venom protein HGE029.